We begin with the raw amino-acid sequence, 64 residues long: Neurotoxin BmK-II (64 aa).

Residues Arg2 to His64 form the LCN-type CS-alpha/beta domain. 4 cysteine pairs are disulfide-bonded: Cys12–Cys63, Cys16–Cys36, Cys22–Cys46, and Cys26–Cys48.

The protein belongs to the long (4 C-C) scorpion toxin superfamily. Sodium channel inhibitor family. Alpha subfamily. As to expression, expressed by the venom gland.

The protein localises to the secreted. Binds to sodium channels (Nav) and inhibits the inactivation of the activated channels, thereby blocking neuronal transmission. This toxin is active against mammals and insects. BmK-II is 6-fold less toxic than BmK-I. This Olivierus martensii (Manchurian scorpion) protein is Neurotoxin BmK-II.